A 379-amino-acid chain; its full sequence is GDSL esterase/lipase At3g05180 (379 aa).

An N-terminal signal peptide occupies residues 1-27; it reads METLFHTLLRLLLFVAISHTLSPLAGS. Ser43 functions as the Nucleophile in the catalytic mechanism. Residues Asn294 and Asn330 are each glycosylated (N-linked (GlcNAc...) asparagine). Residues Asp349 and His352 contribute to the active site.

It belongs to the 'GDSL' lipolytic enzyme family.

It localises to the secreted. In Arabidopsis thaliana (Mouse-ear cress), this protein is GDSL esterase/lipase At3g05180.